The sequence spans 540 residues: MASQEFEVEAIVDKRQDKNGNTQYLVRWKGYDKQDDTWEPEQHLMNCEKCVHDFNRRQTEKQKKLTWTTTSRIFSNNARRRTSRSTKANYSKNSPKTPVTDKHHRSKNRKLFAASKNVRRKAASILSDTKNMEIINSTIETLAPDSPFDHKTVSGFQKLEKLDPIAADQQDTVVFKVTEGKLLRDPLSRPGAEQTGIQNKTQIHPLMSQMSGSVTASMATGSATRKGIVVLIDPLAANGTTDMHTSVPRVKGGQRNITDDSRDQPFIKKMHFTIRLTESASTYRDIVVKKEDGFTQIVLSTRSTEKNALNTEVIKEIVNALNSAAADDSKLVLFSAAGSVFCCGLDFGYFVKHLRNNRNTASLEMVDTIKNFVNTFIQFKKPIVVSVNGPAIGLGASILPLCDLVWANEKAWFQTPYTTFGQSPDGCSSITFPKMMGKASANEMLIAGRKLTAREACAKGLVSQVFLTGTFTQEVMIQIKELASYNPIVLEECKALVRCNIKLELEQANERECEVLRKIWSSAQGIESMLKYVENKIDEF.

Positions 6-66 constitute a Chromo domain; that stretch reads FEVEAIVDKR…RQTEKQKKLT (61 aa). Positions 76–106 are disordered; it reads NNARRRTSRSTKANYSKNSPKTPVTDKHHRS. The span at 87–97 shows a compositional bias: polar residues; it reads KANYSKNSPKT.

In terms of assembly, interacts (via chromo domain) with histone H3K9me3. Testis-specific. Detected in spermatids (at protein level).

The protein localises to the nucleus. The enzyme catalyses L-lysyl-[protein] + acetyl-CoA = N(6)-acetyl-L-lysyl-[protein] + CoA + H(+). Its function is as follows. Has histone acetyltransferase activity, with a preference for histone H4. The sequence is that of Testis-specific chromodomain protein Y 1 (CDY1) from Homo sapiens (Human).